Here is a 123-residue protein sequence, read N- to C-terminus: Small ribosomal subunit protein uS12 (123 aa).

D89 carries the post-translational modification 3-methylthioaspartic acid.

The protein belongs to the universal ribosomal protein uS12 family. Part of the 30S ribosomal subunit. Contacts proteins S8 and S17. May interact with IF1 in the 30S initiation complex.

With S4 and S5 plays an important role in translational accuracy. Functionally, interacts with and stabilizes bases of the 16S rRNA that are involved in tRNA selection in the A site and with the mRNA backbone. Located at the interface of the 30S and 50S subunits, it traverses the body of the 30S subunit contacting proteins on the other side and probably holding the rRNA structure together. The combined cluster of proteins S8, S12 and S17 appears to hold together the shoulder and platform of the 30S subunit. The sequence is that of Small ribosomal subunit protein uS12 from Prochlorococcus marinus (strain MIT 9211).